The primary structure comprises 331 residues: L-lactate dehydrogenase A chain (331 aa).

Residues 29 to 57 (GMVG…MEDK) and Arg-98 contribute to the NAD(+) site. Substrate contacts are provided by Arg-105, Asn-137, and Arg-168. Asn-137 lines the NAD(+) pocket. His-192 acts as the Proton acceptor in catalysis. Thr-247 contacts substrate.

Belongs to the LDH/MDH superfamily. LDH family. Homotetramer.

The protein resides in the cytoplasm. It catalyses the reaction (S)-lactate + NAD(+) = pyruvate + NADH + H(+). Its pathway is fermentation; pyruvate fermentation to lactate; (S)-lactate from pyruvate: step 1/1. Its function is as follows. Interconverts simultaneously and stereospecifically pyruvate and lactate with concomitant interconversion of NADH and NAD(+). The chain is L-lactate dehydrogenase A chain (ldha) from Parachaenichthys charcoti (Charcot's dragonfish).